A 665-amino-acid polypeptide reads, in one-letter code: F-box/LRR-repeat protein 3 (665 aa).

In terms of domain architecture, F-box spans 11–60 (KPFDLLSEELVFIILDLISPNPSDLKSFSLTCKSFYQLESKHRGSLKPLR). LRR repeat units lie at residues 61 to 81 (SDYLPRILTRYRNTTDLDLTF), 82 to 108 (CPRVTDYALSVVGCLSGPTLRSLDLSR), 109 to 134 (SGSFSAAGLLRLALKCVNLVEIDLSN), 135 to 159 (ATEMRDADAAVVAEARSLERLKLGR), 160 to 185 (CKMLTDMGIGCIAVGCKKLNTVSLKW), 186 to 211 (CVGVGDLGVGLLAVKCKDIRTLDLSY), 214 to 235 (ITGKCLHDILKLQHLEELLLEG), 236 to 261 (CFGVDDDSLKSLRHDCKSLKKLDASS), 262 to 287 (CQNLTHRGLTSLLSGAGYLQRLDLSH), 288 to 312 (CSSVISLDFASSLKKVSALQSIRLD), 313 to 338 (GCSVTPDGLKAIGTLCNSLKEVSLSK), 339 to 364 (CVSVTDEGLSSLVMKLKDLRKLDITC), 365 to 390 (CRKLSRVSITQIANSCPLLVSLKMES), 391 to 416 (CSLVSREAFWLIGQKCRLLEELDLTD), 419 to 440 (IDDEGLKSISSCLSLSSLKLGI), 441 to 466 (CLNITDKGLSYIGMGCSNLRELDLYR), 467 to 492 (SVGITDVGISTIAQGCIHLETINISY), 493 to 517 (CQDITDKSLVSLSKCSLLQTFESRG), 518 to 543 (CPNITSQGLAAIAVRCKRLAKVDLKK), 544 to 569 (CPSINDAGLLALAHFSQNLKQINVSD), and 594 to 619 (SSGLRPSGVAAALLGCGGLRKAKLHA).

This chain is F-box/LRR-repeat protein 3 (FBL3), found in Arabidopsis thaliana (Mouse-ear cress).